A 191-amino-acid chain; its full sequence is dCTP deaminase (191 aa).

DCTP is bound by residues 112-117 (KSTYAR), 136-138 (TLE), glutamine 157, tyrosine 173, and glutamine 183. Catalysis depends on glutamate 138, which acts as the Proton donor/acceptor.

It belongs to the dCTP deaminase family. In terms of assembly, homotrimer.

The enzyme catalyses dCTP + H2O + H(+) = dUTP + NH4(+). It functions in the pathway pyrimidine metabolism; dUMP biosynthesis; dUMP from dCTP (dUTP route): step 1/2. Its function is as follows. Catalyzes the deamination of dCTP to dUTP. This is dCTP deaminase from Psychrobacter sp. (strain PRwf-1).